Here is a 189-residue protein sequence, read N- to C-terminus: Small ribosomal subunit protein uS7 (189 aa).

The protein belongs to the universal ribosomal protein uS7 family. Part of the 30S ribosomal subunit.

One of the primary rRNA binding proteins, it binds directly to 16S rRNA where it nucleates assembly of the head domain of the 30S subunit. Is located at the subunit interface close to the decoding center. The polypeptide is Small ribosomal subunit protein uS7 (Methanosarcina mazei (strain ATCC BAA-159 / DSM 3647 / Goe1 / Go1 / JCM 11833 / OCM 88) (Methanosarcina frisia)).